A 118-amino-acid chain; its full sequence is DNA-binding protein Msm_0708 (118 aa).

Residues 16–39 (EARQAAAQGQMQQQAQQQMQQQEA) are disordered. Low complexity predominate over residues 18–39 (RQAAAQGQMQQQAQQQMQQQEA).

Belongs to the PDCD5 family.

This chain is DNA-binding protein Msm_0708, found in Methanobrevibacter smithii (strain ATCC 35061 / DSM 861 / OCM 144 / PS).